The chain runs to 184 residues: Putative manganese efflux pump MntP (184 aa).

A run of 6 helical transmembrane segments spans residues 12–32, 39–59, 63–83, 99–119, 132–152, and 164–184; these read SIMA…MGMI, IIYI…FGML, LLSG…LLVL, FIAP…LDSF, VWMT…LGLL, and YSGA…LFPL.

It belongs to the MntP (TC 9.B.29) family.

It localises to the cell membrane. In terms of biological role, probably functions as a manganese efflux pump. This Bacillus pumilus (strain SAFR-032) protein is Putative manganese efflux pump MntP.